Reading from the N-terminus, the 166-residue chain is Tegument protein UL55 homolog (166 aa).

This sequence belongs to the alphaherpesvirinae HHV-1 UL55 family.

Its subcellular location is the virion tegument. The protein localises to the host nucleus matrix. The polypeptide is Tegument protein UL55 homolog (MDV070) (Gallid herpesvirus 2 (strain Chicken/Md5/ATCC VR-987) (GaHV-2)).